The primary structure comprises 249 residues: Probable transcriptional regulatory protein LBL_2537 (249 aa).

The protein belongs to the TACO1 family.

The protein resides in the cytoplasm. The sequence is that of Probable transcriptional regulatory protein LBL_2537 from Leptospira borgpetersenii serovar Hardjo-bovis (strain L550).